The following is a 583-amino-acid chain: Aspartate--tRNA ligase (583 aa).

E174 provides a ligand contact to L-aspartate. Positions 198–201 (QITK) are aspartate. L-aspartate is bound at residue R220. ATP-binding positions include 220–222 (RDE) and Q229. H443 contributes to the L-aspartate binding site. E477 contacts ATP. R484 is an L-aspartate binding site. 529-532 (GLDR) is an ATP binding site.

This sequence belongs to the class-II aminoacyl-tRNA synthetase family. Type 1 subfamily. Homodimer.

It localises to the cytoplasm. The catalysed reaction is tRNA(Asp) + L-aspartate + ATP = L-aspartyl-tRNA(Asp) + AMP + diphosphate. Its function is as follows. Catalyzes the attachment of L-aspartate to tRNA(Asp) in a two-step reaction: L-aspartate is first activated by ATP to form Asp-AMP and then transferred to the acceptor end of tRNA(Asp). This chain is Aspartate--tRNA ligase, found in Streptococcus thermophilus (strain CNRZ 1066).